The chain runs to 335 residues: Phosphate acyltransferase (335 aa).

It belongs to the PlsX family. In terms of assembly, homodimer. Probably interacts with PlsY.

It localises to the cytoplasm. It catalyses the reaction a fatty acyl-[ACP] + phosphate = an acyl phosphate + holo-[ACP]. Its pathway is lipid metabolism; phospholipid metabolism. Catalyzes the reversible formation of acyl-phosphate (acyl-PO(4)) from acyl-[acyl-carrier-protein] (acyl-ACP). This enzyme utilizes acyl-ACP as fatty acyl donor, but not acyl-CoA. This is Phosphate acyltransferase from Clostridium botulinum (strain Langeland / NCTC 10281 / Type F).